Consider the following 118-residue polypeptide: Protein RALF-like 24 (118 aa).

The N-terminal stretch at 1–22 (MSRSLALVYLSLLCLQTHLSIS) is a signal peptide. The propeptide at 23–63 (VTVPIPSVNGEIDAMLNRNGVIGEEEGEEMMPSEISRRVMM) is removed in mature form. 2 disulfide bridges follow: C81-C91 and C103-C109.

It belongs to the plant rapid alkalinization factor (RALF) family. Proteolytically cleaved, probably by S1P, a subtilisin-like serine protease (subtilase).

It is found in the secreted. Its function is as follows. Cell signaling peptide that may regulate plant stress, growth, and development. Mediates a rapid alkalinization of extracellular space by mediating a transient increase in the cytoplasmic Ca(2+) concentration leading to a calcium-dependent signaling events through a cell surface receptor and a concomitant activation of some intracellular mitogen-activated protein kinases. The sequence is that of Protein RALF-like 24 (RALFL24) from Arabidopsis thaliana (Mouse-ear cress).